The sequence spans 326 residues: Aldo-keto reductase family 1 member D1 (326 aa).

Residues Gly22 to Tyr26 and Asp52 each bind NADP(+). A substrate-binding site is contributed by Tyr26. The substrate site is built by Tyr57, Trp88, Glu119, and Tyr131. The active-site Proton donor is Tyr57. Residues Ser168 to Asn169, Gln192, and Tyr219 to Thr224 each bind NADP(+). Residue Trp230 participates in substrate binding. Lys273 to Asn283 contacts NADP(+).

This sequence belongs to the aldo/keto reductase family. Post-translationally, the N-terminus is blocked.

The protein resides in the cytoplasm. The enzyme catalyses 5beta-cholestan-3-one + NADP(+) = cholest-4-en-3-one + NADPH + H(+). It carries out the reaction 4,5beta-dihydrocortisone + NADP(+) = cortisone + NADPH + H(+). The catalysed reaction is cortisol + NADPH + H(+) = 5beta-dihydrocortisol + NADP(+). It catalyses the reaction corticosterone + NADPH + H(+) = 5beta-dihydrocorticosterone + NADP(+). The enzyme catalyses 7alpha,12alpha-dihydroxycholest-4-en-3-one + NADPH + H(+) = 7alpha,12alpha-dihydroxy-5beta-cholestan-3-one + NADP(+). It carries out the reaction 7alpha-hydroxycholest-4-en-3-one + NADPH + H(+) = 7alpha-hydroxy-5beta-cholestan-3-one + NADP(+). The catalysed reaction is epitestosterone + NADPH + H(+) = 5beta-dihydroepitestosterone + NADP(+). It catalyses the reaction androst-4-ene-3,17-dione + NADPH + H(+) = 5beta-androstane-3,17-dione + NADP(+). The enzyme catalyses progesterone + NADPH + H(+) = 5beta-pregnan-3,20-dione + NADP(+). It carries out the reaction 21-hydroxyprogesterone + NADPH + H(+) = 5beta-dihydrodeoxycorticosterone + NADP(+). The catalysed reaction is aldosterone + NADPH + H(+) = 5beta-dihydroaldosterone + NADP(+). It catalyses the reaction 17beta-hydroxyandrosta-1,4-dien-3-one + NADPH + H(+) = 17beta-hydroxy-5beta-androst-1-en-3-one + NADP(+). The enzyme catalyses 17beta-hydroxyestr-4-en-3-one + NADPH + H(+) = 17beta-hydroxy-5beta-estran-3-one + NADP(+). It carries out the reaction 5beta-dihydrotestosterone + NADP(+) = testosterone + NADPH + H(+). The catalysed reaction is androst-4-ene-3,11,17-trione + NADPH + H(+) = 17beta-hydroxyandrost-4-ene-3,11-dione + NADP(+). Its activity is regulated as follows. Subject to inhibition by high substrate concentrations. Inhibited by testosterone concentrations above 10 uM. Inhibited by the primary and secondary bile acids chenodeoxycholic acid and ursodeoxycholic acid. Functionally, catalyzes the stereospecific NADPH-dependent reduction of the C4-C5 double bond of bile acid intermediates and steroid hormones carrying a delta(4)-3-one structure to yield an A/B cis-ring junction. This cis-configuration is crucial for bile acid biosynthesis and plays important roles in steroid metabolism. Capable of reducing a broad range of delta-(4)-3-ketosteroids from C18 (such as, 17beta-hydroxyestr-4-en-3-one) to C27 (such as, 7alpha-hydroxycholest-4-en-3-one). This chain is Aldo-keto reductase family 1 member D1 (Akr1d1), found in Rattus norvegicus (Rat).